Here is a 359-residue protein sequence, read N- to C-terminus: DNA polymerase IV (359 aa).

The UmuC domain occupies 4-185; sequence IIHIDMDCYF…LSLRKIPGVG (182 aa). Mg(2+) is bound by residues Asp-8 and Asp-103. Glu-104 is a catalytic residue.

The protein belongs to the DNA polymerase type-Y family. Monomer. Mg(2+) is required as a cofactor.

The protein localises to the cytoplasm. It carries out the reaction DNA(n) + a 2'-deoxyribonucleoside 5'-triphosphate = DNA(n+1) + diphosphate. Its function is as follows. Poorly processive, error-prone DNA polymerase involved in untargeted mutagenesis. Copies undamaged DNA at stalled replication forks, which arise in vivo from mismatched or misaligned primer ends. These misaligned primers can be extended by PolIV. Exhibits no 3'-5' exonuclease (proofreading) activity. May be involved in translesional synthesis, in conjunction with the beta clamp from PolIII. The protein is DNA polymerase IV of Shewanella sp. (strain MR-7).